The primary structure comprises 438 residues: Serine hydroxymethyltransferase 1 (438 aa).

(6S)-5,6,7,8-tetrahydrofolate contacts are provided by residues leucine 130 and 134–136 (GHL). The residue at position 239 (lysine 239) is an N6-(pyridoxal phosphate)lysine.

Belongs to the SHMT family. In terms of assembly, homodimer. The cofactor is pyridoxal 5'-phosphate.

It is found in the cytoplasm. The enzyme catalyses (6R)-5,10-methylene-5,6,7,8-tetrahydrofolate + glycine + H2O = (6S)-5,6,7,8-tetrahydrofolate + L-serine. It functions in the pathway one-carbon metabolism; tetrahydrofolate interconversion. It participates in amino-acid biosynthesis; glycine biosynthesis; glycine from L-serine: step 1/1. Catalyzes the reversible interconversion of serine and glycine with tetrahydrofolate (THF) serving as the one-carbon carrier. This reaction serves as the major source of one-carbon groups required for the biosynthesis of purines, thymidylate, methionine, and other important biomolecules. Also exhibits THF-independent aldolase activity toward beta-hydroxyamino acids, producing glycine and aldehydes, via a retro-aldol mechanism. Thus, is able to catalyze the cleavage of L-allo-threonine. The sequence is that of Serine hydroxymethyltransferase 1 from Mycobacterium tuberculosis (strain ATCC 25618 / H37Rv).